The chain runs to 141 residues: LEKPKYRCPACRVPYCSVACFRKHKEQCNPETRPVEKKIRSALPTKTVKPVENKDDDDSIADFLNSDEEEDRVSLQNLKNLGESATLRSLLLNPHLRQLMVNLDQGEDKAKLMRAYMQEPLFVEFADCCLGIVEPSQNEES.

An HIT-type; degenerate zinc finger spans residues 1 to 28 (LEKPKYRCPACRVPYCSVACFRKHKEQC). Positions 8, 11, 24, and 28 each coordinate Zn(2+). The residue at position 66 (Ser-66) is a Phosphoserine.

In terms of assembly, thyroid receptor interacting proteins (TRIPs) specifically interact with the ligand binding domain of the thyroid receptor (TR). Requires the presence of thyroid hormone for its interaction. Interacts with NUFIP1. Interacts (via HIT-type zinc finger) with the RUVBL1/RUVBL2 complex in the presence of ADP.

It is found in the cytoplasm. The protein localises to the nucleus. The polypeptide is Zinc finger HIT domain-containing protein 3 (ZNHIT3) (Pan troglodytes (Chimpanzee)).